Consider the following 843-residue polypeptide: MPLSYQHFRKLLLLDEEAGPLEEELPRLADEGLNRRVAEDLNLGNLNVSIPWTHKVGNFTGLYSSTVPCFNPNWQTPSFPDIHLQEDIVDRCQQFVGPLTVNENRRLKLIMPARFYPNVTKYLPLDKGIKPYYPEHVVNHYFQTRHYLHTLWKAGILYKRESTRSASFCGSPYSWEQDLQHGRLVFQTSKRHGDKSCCPQSPGILSRSSVGPCIQSQLRQSRLGPQPAQGQLAGRQQGGSGSIRARVHPSPWGTVGVEPSGSGPTHNCASSSSSCLHQSAVRKAAYSLVSTSKGYSSSGHAVELHHFPPNSSRSQSQGPVLSCWWLQFRNSEPCSEYCLCHIVNLIEDWGPCTEHGEHLIRTPRTPARVTGGVFLVDKNPHNTTESRLVVDFSQFSRANTRVSWPKFAVPNLQSLTNLLSSNLSWLSLDVSAAFYHLPLHPAAMPHLLVGSSGLSRYVARLSSNSRIINNQHRTMQNLHNSCSRNLYVSLMLLYKTYGRKLHLYSHPIILGFRKIPMGVGLSPFLLAQFTSAICSVVRRAFPHCLAFSYMDDVVLGAKSVQHLESLYAAVTHFLLSLGIHLNPHKTKRWGYSLNFMGYVIGSWGTLPQEHIVQKIKMCFRKLPVNRPIDWKVCQRIVGLLGFAAPFTQCGYPALMPLYACIQAKQAFTFSPTYKAFLRNQYLNLYPVARQRPGLCQVFADATPTGWGLAIGHQRMRGTFVSPLPIHTAELLAACFARSRSGAKLIGTDNSVVLSRKYTSFPWLLGCAANWILRGTSFVYVPSALNPADDPSRGRLGLYRPLLRLLYRPTTGRTSLYADSPSVPSHLPDRVHFASPLHVAWRPP.

A terminal protein domain (TP) region spans residues 1 to 177 (MPLSYQHFRK…FCGSPYSWEQ (177 aa)). Residues 178–346 (DLQHGRLVFQ…YCLCHIVNLI (169 aa)) are spacer. Residues 220–265 (QSRLGPQPAQGQLAGRQQGGSGSIRARVHPSPWGTVGVEPSGSGPT) are disordered. Residues 223–235 (LGPQPAQGQLAGR) show a composition bias toward low complexity. The polymerase/reverse transcriptase domain (RT) stretch occupies residues 347-690 (EDWGPCTEHG…YLNLYPVARQ (344 aa)). The 244-residue stretch at 357–600 (EHLIRTPRTP…YSLNFMGYVI (244 aa)) folds into the Reverse transcriptase domain. Mg(2+) contacts are provided by Asp-429, Asp-551, and Asp-552.

This sequence belongs to the hepadnaviridae P protein family.

The catalysed reaction is DNA(n) + a 2'-deoxyribonucleoside 5'-triphosphate = DNA(n+1) + diphosphate. It carries out the reaction Endonucleolytic cleavage to 5'-phosphomonoester.. Activated by host HSP70 and HSP40 in vitro to be able to bind the epsilon loop of the pgRNA. Because deletion of the RNase H region renders the protein partly chaperone-independent, the chaperones may be needed indirectly to relieve occlusion of the RNA-binding site by this domain. Inhibited by several reverse-transcriptase inhibitors: Lamivudine, Adefovir and Entecavir. Multifunctional enzyme that converts the viral RNA genome into dsDNA in viral cytoplasmic capsids. This enzyme displays a DNA polymerase activity that can copy either DNA or RNA templates, and a ribonuclease H (RNase H) activity that cleaves the RNA strand of RNA-DNA heteroduplexes in a partially processive 3'- to 5'-endonucleasic mode. Neo-synthesized pregenomic RNA (pgRNA) are encapsidated together with the P protein, and reverse-transcribed inside the nucleocapsid. Initiation of reverse-transcription occurs first by binding the epsilon loop on the pgRNA genome, and is initiated by protein priming, thereby the 5'-end of (-)DNA is covalently linked to P protein. Partial (+)DNA is synthesized from the (-)DNA template and generates the relaxed circular DNA (RC-DNA) genome. After budding and infection, the RC-DNA migrates in the nucleus, and is converted into a plasmid-like covalently closed circular DNA (cccDNA). The activity of P protein does not seem to be necessary for cccDNA generation, and is presumably released from (+)DNA by host nuclear DNA repair machinery. This is Protein P from Hepatitis B virus genotype B2 (isolate Vietnam/9873/1997) (HBV-B).